The primary structure comprises 347 residues: 3-isopropylmalate dehydrogenase (347 aa).

Positions 94, 104, 128, and 219 each coordinate substrate. Residues Asp-219, Asp-243, and Asp-247 each coordinate Mg(2+). 279-291 (GSAPDIAGQGKAD) provides a ligand contact to NAD(+).

This sequence belongs to the isocitrate and isopropylmalate dehydrogenases family. LeuB type 2 subfamily. As to quaternary structure, homodimer. Requires Mg(2+) as cofactor. Mn(2+) is required as a cofactor.

The protein resides in the cytoplasm. It carries out the reaction (2R,3S)-3-isopropylmalate + NAD(+) = 4-methyl-2-oxopentanoate + CO2 + NADH. It participates in amino-acid biosynthesis; L-leucine biosynthesis; L-leucine from 3-methyl-2-oxobutanoate: step 3/4. In terms of biological role, catalyzes the oxidation of 3-carboxy-2-hydroxy-4-methylpentanoate (3-isopropylmalate) to 3-carboxy-4-methyl-2-oxopentanoate. The product decarboxylates to 4-methyl-2 oxopentanoate. The sequence is that of 3-isopropylmalate dehydrogenase from Streptomyces griseus subsp. griseus (strain JCM 4626 / CBS 651.72 / NBRC 13350 / KCC S-0626 / ISP 5235).